We begin with the raw amino-acid sequence, 703 residues long: Serotransferrin (703 aa).

The first 19 residues, 1-19, serve as a signal peptide directing secretion; that stretch reads MDLSLHVALCLGMLALCLA. Transferrin-like domains follow at residues 27–341 and 354–686; these read VRWC…ALKE and VRWC…SLNK. Cystine bridges form between Cys30–Cys65 and Cys40–Cys56. Residues Asp80 and Tyr112 each contribute to the Fe(3+) site. Disulfide bonds link Cys135–Cys218, Cys180–Cys193, and Cys246–Cys260. Residues Thr137, Lys141, Ala143, and Gly144 each contribute to the hydrogencarbonate site. A Fe(3+)-binding site is contributed by Tyr212. His268 serves as a coordination point for Fe(3+). The connecting region stretch occupies residues 341-350; that stretch reads EGVKEDDLAA. 2 disulfide bridges follow: Cys357-Cys389 and Cys367-Cys380. Asp404 and Tyr443 together coordinate Fe(3+). Intrachain disulfides connect Cys414-Cys698, Cys432-Cys659, Cys466-Cys545, Cys490-Cys687, Cys500-Cys514, Cys511-Cys528, and Cys585-Cys599. Hydrogencarbonate-binding residues include Thr468, Arg472, Ala474, and Gly475. Tyr539 lines the Fe(3+) pocket. Position 607 (His607) interacts with Fe(3+).

The protein belongs to the transferrin family. In terms of assembly, monomer. As to expression, plasma.

It localises to the secreted. In terms of biological role, transferrins are iron binding transport proteins which can bind two Fe(3+) ions in association with the binding of an anion, usually bicarbonate. It is responsible for the transport of iron from sites of absorption and heme degradation to those of storage and utilization. Serum transferrin may also have a further role in stimulating cell proliferation. The sequence is that of Serotransferrin (tf) from Xenopus tropicalis (Western clawed frog).